The following is a 1037-amino-acid chain: Multidrug resistance protein MdtF (1037 aa).

Topologically, residues 1-9 (MANYFIDRP) are cytoplasmic. A helical transmembrane segment spans residues 10–30 (VFAWVLAIIMMLAGGLAIMNL). Residues 31–338 (PVAQYPQIAP…TTPFIKISIQ (308 aa)) are Periplasmic-facing. Residues 339-359 (EVFKTLVEAIILVFLVMYLFL) traverse the membrane as a helical segment. The Cytoplasmic portion of the chain corresponds to 360–369 (QNFRATIIPT). Residues 370 to 390 (IAVPVVILGTFAILSAVGFTI) traverse the membrane as a helical segment. At 391–392 (NT) the chain is on the periplasmic side. Residues 393–413 (LTMFGMVLAIGLLVDDAIVVV) form a helical membrane-spanning segment. Residues 414–440 (ENVERVIAEDKLPPKEATHKSMGQIQR) are Cytoplasmic-facing. A helical transmembrane segment spans residues 441–461 (ALVGIAVVLSAVFMPMAFMSG). At 462–471 (ATGEIYRQFS) the chain is on the periplasmic side. The chain crosses the membrane as a helical span at residues 472 to 492 (ITLISSMLLSVFVAMSLTPAL). The Cytoplasmic portion of the chain corresponds to 493–534 (CATILKAAPEGGHKPNALFARFNTLFEKSTQHYTDSTRSLLR). Residues 535 to 555 (CTGRYMVVYLLICAGMAVLFL) form a helical membrane-spanning segment. Topologically, residues 556–870 (RTPTSFLPEE…SYQEALSSNQ (315 aa)) are periplasmic. The chain crosses the membrane as a helical span at residues 871–891 (APALYAISLVVVFLALAALYE). S892 is a topological domain (cytoplasmic). Residues 893-913 (WSIPFSVMLVVPLGVVGALLA) form a helical membrane-spanning segment. Topologically, residues 914–927 (TDLRGLSNDVYFQV) are periplasmic. The chain crosses the membrane as a helical span at residues 928 to 948 (GLLTTIGLSAKNAILIVEFAV). At 949–972 (EMMQKEGKTPVEAIIEAARMRLRP) the chain is on the cytoplasmic side. The chain crosses the membrane as a helical span at residues 973-993 (ILMTSLAFILGVLPLVISHGA). The Periplasmic segment spans residues 994-1006 (GSGAQNAVGTGVM). The chain crosses the membrane as a helical span at residues 1007–1027 (GGMFAATVLAIYFVPVFFVVV). The Cytoplasmic segment spans residues 1028–1037 (EHLFARFKKA).

The protein belongs to the resistance-nodulation-cell division (RND) (TC 2.A.6) family. In terms of assembly, homotrimer. Part of the tripartite efflux system MdtEF-TolC, which is composed of an inner membrane transporter, MdtF, a membrane fusion protein, MdtE, and an outer membrane component, TolC. The complex forms a large protein conduit and can translocate molecules across both the inner and outer membranes.

The protein localises to the cell inner membrane. Part of the tripartite efflux system MdtEF-TolC, which confers resistance to various compounds. The chain is Multidrug resistance protein MdtF (mdtF) from Escherichia coli O6:H1 (strain CFT073 / ATCC 700928 / UPEC).